Consider the following 291-residue polypeptide: Small ribosomal subunit protein uS2 (291 aa).

Residues 231–291 (NRGSGTTEAP…AAEAPAEDAK (61 aa)) form a disordered region. Basic and acidic residues predominate over residues 246–259 (EWERELLEGSKAEE). Over residues 260-285 (AAAAAPAENAEAPAAPAAEAPAAAEA) the composition is skewed to low complexity.

The protein belongs to the universal ribosomal protein uS2 family.

The polypeptide is Small ribosomal subunit protein uS2 (Pseudarthrobacter chlorophenolicus (strain ATCC 700700 / DSM 12829 / CIP 107037 / JCM 12360 / KCTC 9906 / NCIMB 13794 / A6) (Arthrobacter chlorophenolicus)).